Here is a 78-residue protein sequence, read N- to C-terminus: DNA-directed RNA polymerase subunit Rpo5 (78 aa).

The protein belongs to the archaeal Rpo5/eukaryotic RPB5 RNA polymerase subunit family. In terms of assembly, part of the RNA polymerase complex.

Its subcellular location is the cytoplasm. The enzyme catalyses RNA(n) + a ribonucleoside 5'-triphosphate = RNA(n+1) + diphosphate. In terms of biological role, DNA-dependent RNA polymerase (RNAP) catalyzes the transcription of DNA into RNA using the four ribonucleoside triphosphates as substrates. This Methanococcus maripaludis (strain C7 / ATCC BAA-1331) protein is DNA-directed RNA polymerase subunit Rpo5.